Consider the following 156-residue polypeptide: ATP synthase subunit b (156 aa).

Residues 11 to 31 (AIAFVLFVLFCMKYVWPPLMA) form a helical membrane-spanning segment.

The protein belongs to the ATPase B chain family. F-type ATPases have 2 components, F(1) - the catalytic core - and F(0) - the membrane proton channel. F(1) has five subunits: alpha(3), beta(3), gamma(1), delta(1), epsilon(1). F(0) has three main subunits: a(1), b(2) and c(10-14). The alpha and beta chains form an alternating ring which encloses part of the gamma chain. F(1) is attached to F(0) by a central stalk formed by the gamma and epsilon chains, while a peripheral stalk is formed by the delta and b chains.

It is found in the cell inner membrane. In terms of biological role, f(1)F(0) ATP synthase produces ATP from ADP in the presence of a proton or sodium gradient. F-type ATPases consist of two structural domains, F(1) containing the extramembraneous catalytic core and F(0) containing the membrane proton channel, linked together by a central stalk and a peripheral stalk. During catalysis, ATP synthesis in the catalytic domain of F(1) is coupled via a rotary mechanism of the central stalk subunits to proton translocation. Its function is as follows. Component of the F(0) channel, it forms part of the peripheral stalk, linking F(1) to F(0). The chain is ATP synthase subunit b from Sodalis glossinidius (strain morsitans).